Reading from the N-terminus, the 347-residue chain is S-adenosylmethionine:tRNA ribosyltransferase-isomerase (347 aa).

This sequence belongs to the QueA family. As to quaternary structure, monomer.

It localises to the cytoplasm. The enzyme catalyses 7-aminomethyl-7-carbaguanosine(34) in tRNA + S-adenosyl-L-methionine = epoxyqueuosine(34) in tRNA + adenine + L-methionine + 2 H(+). It participates in tRNA modification; tRNA-queuosine biosynthesis. Functionally, transfers and isomerizes the ribose moiety from AdoMet to the 7-aminomethyl group of 7-deazaguanine (preQ1-tRNA) to give epoxyqueuosine (oQ-tRNA). This chain is S-adenosylmethionine:tRNA ribosyltransferase-isomerase, found in Methylococcus capsulatus (strain ATCC 33009 / NCIMB 11132 / Bath).